The sequence spans 336 residues: MTSPILDRDRLSQQLQDLQAKALQAIATASTLDALEQLRVAYLGKKGELSQILALMGKLPAGDRPTIGTLANTLKEKLLQELEARRATLQAEKIAAQLAAESLDVTMPGVYRPQGHIHPLHSTIDRILDIFVGLGYTVANGPEMETEYYNFEALNTPADHPARDMQDTFYLPDGNLLRTHTSSVQIRYMELYEPPIRIVAPGRCYRRDTEDATHAAVFHQIEILAVDEGLTFTDLKGTVTTFLAELFGDVPIRFRASYFPFTEPSAEVDVQWQGRWLEVMGCGMVDPAVLKNVGYDPEVYTGFAAGFGVERFAMVLHQIDDIRRFYTSDLRFLRQF.

Mg(2+) is bound at residue Glu-263.

Belongs to the class-II aminoacyl-tRNA synthetase family. Phe-tRNA synthetase alpha subunit type 1 subfamily. Tetramer of two alpha and two beta subunits. Requires Mg(2+) as cofactor.

It is found in the cytoplasm. The enzyme catalyses tRNA(Phe) + L-phenylalanine + ATP = L-phenylalanyl-tRNA(Phe) + AMP + diphosphate + H(+). The chain is Phenylalanine--tRNA ligase alpha subunit from Thermosynechococcus vestitus (strain NIES-2133 / IAM M-273 / BP-1).